Here is a 627-residue protein sequence, read N- to C-terminus: 1-deoxy-D-xylulose-5-phosphate synthase (627 aa).

Residues His-80 and 121-123 contribute to the thiamine diphosphate site; that span reads GHS. Asp-152 contacts Mg(2+). Residues 153-154, Asn-181, Tyr-288, and Glu-370 contribute to the thiamine diphosphate site; that span reads GA. Residue Asn-181 participates in Mg(2+) binding.

The protein belongs to the transketolase family. DXPS subfamily. In terms of assembly, homodimer. Requires Mg(2+) as cofactor. The cofactor is thiamine diphosphate.

The enzyme catalyses D-glyceraldehyde 3-phosphate + pyruvate + H(+) = 1-deoxy-D-xylulose 5-phosphate + CO2. Its pathway is metabolic intermediate biosynthesis; 1-deoxy-D-xylulose 5-phosphate biosynthesis; 1-deoxy-D-xylulose 5-phosphate from D-glyceraldehyde 3-phosphate and pyruvate: step 1/1. Catalyzes the acyloin condensation reaction between C atoms 2 and 3 of pyruvate and glyceraldehyde 3-phosphate to yield 1-deoxy-D-xylulose-5-phosphate (DXP). This Aliivibrio salmonicida (strain LFI1238) (Vibrio salmonicida (strain LFI1238)) protein is 1-deoxy-D-xylulose-5-phosphate synthase.